The sequence spans 340 residues: MYG1 protein C27H6.8 (340 aa).

It belongs to the MYG1 family.

The chain is MYG1 protein C27H6.8 from Caenorhabditis elegans.